The primary structure comprises 429 residues: Ribosomal RNA small subunit methyltransferase B (429 aa).

Residues 254–260 (CAAPGGK), Asp-277, Asp-303, and Asp-322 contribute to the S-adenosyl-L-methionine site. Cys-375 (nucleophile) is an active-site residue.

This sequence belongs to the class I-like SAM-binding methyltransferase superfamily. RsmB/NOP family.

The protein localises to the cytoplasm. The catalysed reaction is cytidine(967) in 16S rRNA + S-adenosyl-L-methionine = 5-methylcytidine(967) in 16S rRNA + S-adenosyl-L-homocysteine + H(+). Functionally, specifically methylates the cytosine at position 967 (m5C967) of 16S rRNA. The protein is Ribosomal RNA small subunit methyltransferase B of Shigella flexneri.